A 237-amino-acid polypeptide reads, in one-letter code: Ribonuclease 3 (237 aa).

Residues 3 to 133 form the RNase III domain; sequence SRQPLLDALG…LLGAIYLQHG (131 aa). Glu-43 is a Mg(2+) binding site. The active site involves Asp-47. Asp-119 and Glu-122 together coordinate Mg(2+). Residue Glu-122 is part of the active site. The region spanning 160 to 228 is the DRBM domain; sequence DWKTSLQELT…AAATWKALDV (69 aa).

It belongs to the ribonuclease III family. Homodimer. The cofactor is Mg(2+).

The protein localises to the cytoplasm. It catalyses the reaction Endonucleolytic cleavage to 5'-phosphomonoester.. Functionally, digests double-stranded RNA. Involved in the processing of primary rRNA transcript to yield the immediate precursors to the large and small rRNAs (23S and 16S). Processes some mRNAs, and tRNAs when they are encoded in the rRNA operon. Processes pre-crRNA and tracrRNA of type II CRISPR loci if present in the organism. In Mycolicibacterium paratuberculosis (strain ATCC BAA-968 / K-10) (Mycobacterium paratuberculosis), this protein is Ribonuclease 3.